The primary structure comprises 264 residues: Shikimate dehydrogenase (NADP(+)) (264 aa).

Shikimate is bound by residues 14–16 and T61; that span reads SVS. K65 acts as the Proton acceptor in catalysis. Residues N85 and D99 each coordinate shikimate. NADP(+)-binding positions include 122–126, 145–150, and A208; these read GAGGA and NRTVSR. Residue Y210 participates in shikimate binding. An NADP(+)-binding site is contributed by G231.

Belongs to the shikimate dehydrogenase family. As to quaternary structure, homodimer.

The catalysed reaction is shikimate + NADP(+) = 3-dehydroshikimate + NADPH + H(+). Its pathway is metabolic intermediate biosynthesis; chorismate biosynthesis; chorismate from D-erythrose 4-phosphate and phosphoenolpyruvate: step 4/7. Functionally, involved in the biosynthesis of the chorismate, which leads to the biosynthesis of aromatic amino acids. Catalyzes the reversible NADPH linked reduction of 3-dehydroshikimate (DHSA) to yield shikimate (SA). This Natronomonas pharaonis (strain ATCC 35678 / DSM 2160 / CIP 103997 / JCM 8858 / NBRC 14720 / NCIMB 2260 / Gabara) (Halobacterium pharaonis) protein is Shikimate dehydrogenase (NADP(+)).